Consider the following 962-residue polypeptide: Translation initiation factor IF-2 (962 aa).

The disordered stretch occupies residues 99–365 (VKAAQTQAAP…GKKGKKLKLE (267 aa)). Residues 117-141 (DAAKARAEAAARAEARAKAEAEAAK) are compositionally biased toward basic and acidic residues. The segment covering 145 to 155 (AKAGNKAKPAA) has biased composition (low complexity). The span at 173–216 (KPAEESKAEKAQADKMPSKKPAEPKEKAAKPKHERNGKGKDAKK) shows a compositional bias: basic and acidic residues. Residues 219–234 (KPAAPAVPQPVVSAEE) are compositionally biased toward low complexity. The span at 235–269 (QAQRDEEARRAAALRAHQEALLKEKQERQARREAM) shows a compositional bias: basic and acidic residues. Positions 270-283 (KQQAEQQAKAAQEA) are enriched in low complexity. A compositionally biased stretch (basic and acidic residues) spans 338 to 354 (GGRDRNNARNGDDERVR). Residues 462–631 (PRPPVVTVMG…LLEAEVLELT (170 aa)) form the tr-type G domain. The interval 471–478 (GHVDHGKT) is G1. 471–478 (GHVDHGKT) is a GTP binding site. The segment at 496-500 (GITQH) is G2. The segment at 517-520 (DTPG) is G3. Residues 517–521 (DTPGH) and 571–574 (NKID) each bind GTP. Residues 571 to 574 (NKID) are G4. Positions 607–609 (SAK) are G5.

It belongs to the TRAFAC class translation factor GTPase superfamily. Classic translation factor GTPase family. IF-2 subfamily.

The protein localises to the cytoplasm. One of the essential components for the initiation of protein synthesis. Protects formylmethionyl-tRNA from spontaneous hydrolysis and promotes its binding to the 30S ribosomal subunits. Also involved in the hydrolysis of GTP during the formation of the 70S ribosomal complex. This Neisseria meningitidis serogroup C (strain 053442) protein is Translation initiation factor IF-2.